The sequence spans 432 residues: Trigger factor (432 aa).

The 86-residue stretch at 161 to 246 (GSRATIDFVG…LNKVEARELP (86 aa)) folds into the PPIase FKBP-type domain.

It belongs to the FKBP-type PPIase family. Tig subfamily.

Its subcellular location is the cytoplasm. The enzyme catalyses [protein]-peptidylproline (omega=180) = [protein]-peptidylproline (omega=0). Functionally, involved in protein export. Acts as a chaperone by maintaining the newly synthesized protein in an open conformation. Functions as a peptidyl-prolyl cis-trans isomerase. This chain is Trigger factor, found in Vibrio atlanticus (strain LGP32) (Vibrio splendidus (strain Mel32)).